We begin with the raw amino-acid sequence, 207 residues long: Methylated-DNA--protein-cysteine methyltransferase (207 aa).

DNA contacts are provided by Y123 and R137. The active-site Nucleophile; methyl group acceptor is C154. S160 is a binding site for DNA.

It belongs to the MGMT family.

The protein localises to the nucleus. The enzyme catalyses a 6-O-methyl-2'-deoxyguanosine in DNA + L-cysteinyl-[protein] = S-methyl-L-cysteinyl-[protein] + a 2'-deoxyguanosine in DNA. It carries out the reaction a 4-O-methyl-thymidine in DNA + L-cysteinyl-[protein] = a thymidine in DNA + S-methyl-L-cysteinyl-[protein]. Its function is as follows. Involved in the cellular defense against the biological effects of O6-methylguanine (O6-MeG) and O4-methylthymine (O4-MeT) in DNA. Repairs the methylated nucleobase in DNA by stoichiometrically transferring the methyl group to a cysteine residue in the enzyme. This is a suicide reaction: the enzyme is irreversibly inactivated. The chain is Methylated-DNA--protein-cysteine methyltransferase (MGT1) from Candida glabrata (strain ATCC 2001 / BCRC 20586 / JCM 3761 / NBRC 0622 / NRRL Y-65 / CBS 138) (Yeast).